The sequence spans 103 residues: Integration host factor subunit alpha (103 aa).

The protein belongs to the bacterial histone-like protein family. In terms of assembly, heterodimer of an alpha and a beta chain.

Its function is as follows. This protein is one of the two subunits of integration host factor, a specific DNA-binding protein that functions in genetic recombination as well as in transcriptional and translational control. This Bartonella bacilliformis (strain ATCC 35685 / KC583 / Herrer 020/F12,63) protein is Integration host factor subunit alpha.